The following is a 548-amino-acid chain: Phenylalanine--tRNA ligase beta subunit (548 aa).

The B5 domain occupies 275–350 (LKEDVLETTS…IAYGYNKFSG (76 aa)). 4 residues coordinate Mg(2+): D328, D334, E337, and E338.

Belongs to the phenylalanyl-tRNA synthetase beta subunit family. Type 2 subfamily. In terms of assembly, tetramer of two alpha and two beta subunits. Mg(2+) serves as cofactor.

It localises to the cytoplasm. It carries out the reaction tRNA(Phe) + L-phenylalanine + ATP = L-phenylalanyl-tRNA(Phe) + AMP + diphosphate + H(+). This is Phenylalanine--tRNA ligase beta subunit from Methanocaldococcus jannaschii (strain ATCC 43067 / DSM 2661 / JAL-1 / JCM 10045 / NBRC 100440) (Methanococcus jannaschii).